We begin with the raw amino-acid sequence, 201 residues long: MNVPWENAHGGALYCLIRGDEFSAWHRLLFQRPGCAESVLACRHFLDGSPVARCSYPEEYHPCVISRIALLCDSVGWTADVERISAWLNGLDRETYELVFAAIEVLEEEGPALGCPLVDTVRGSRHKNMKELRPGSQGRSEVRILFAFDPARQAIMLAAGNKAGRWTQWYDEKIKAADEMFAEHLAQFEDTKPKRRKRKKG.

This sequence belongs to the mycobacterial HigB family.

Putative toxic component of a type II toxin-antitoxin (TA) system. Its cognate antitoxin would be HigA2. This Mycobacterium tuberculosis (strain ATCC 25618 / H37Rv) protein is Putative toxin HigB2.